The primary structure comprises 359 residues: MSEVLITGLRTRAVNVPLAYPVHTAVGTVGTAPLVLIDLATSAGVVGHSYLFAYTPVALKSLKQLLDDMAAMIVNEPLAPVSLEAMLAKRFCLAGYTGLIRMAAAGIDMAAWDALGKVHETPLVKLLGANARPVQAYDSHSLDGVKLATERAVTAAELGFRAVKTKIGYPALDQDLAVVRSIRQAVGDDFGIMVDYNQSLDVPAAIKRSQALQQEGVTWIEEPTLQHDYEGHQRIQSKLNVPVQMGENWLGPEEMFKALSIGACRLAMPDAMKIGGVTGWIRASALAQQFGIPMSSHLFQEISAHLLAATPTAHWLERLDLAGSVIEPTLTFEGGNAVIPDLPGVGIIWREKEIGKYLV.

The active-site Proton acceptor; specific for S-mandelate is lysine 166. Positions 195, 221, and 247 each coordinate Mg(2+). The active-site Proton acceptor; specific for R-mandelate is the histidine 297. Residue glutamate 317 participates in substrate binding.

The protein belongs to the mandelate racemase/muconate lactonizing enzyme family. Homooctamer. Mg(2+) is required as a cofactor.

The enzyme catalyses (S)-mandelate = (R)-mandelate. The protein operates within aromatic compound metabolism; (R)-mandelate degradation; benzoate from (R)-mandelate: step 1/4. This is Mandelate racemase (mdlA) from Pseudomonas putida (Arthrobacter siderocapsulatus).